Reading from the N-terminus, the 122-residue chain is U19-hexatoxin-Hi1a (122 aa).

The N-terminal stretch at 1–18 (MNTMIGFIVLLVSATVLG) is a signal peptide. The propeptide occupies 19–80 (DPELDALRKE…YENSNFREKR (62 aa)). 3 cysteine pairs are disulfide-bonded: Cys-81–Cys-96, Cys-88–Cys-101, and Cys-95–Cys-116.

As to expression, expressed by the venom gland.

It is found in the secreted. Its function is as follows. Probable ion channel inhibitor. The sequence is that of U19-hexatoxin-Hi1a from Hadronyche infensa (Fraser island funnel-web spider).